Here is a 402-residue protein sequence, read N- to C-terminus: Enoyl-[acyl-carrier-protein] reductase [NADH] (402 aa).

Residues 48-53 (GASSGY), 74-75 (FE), 111-112 (DA), and 140-141 (LA) each bind NAD(+). Tyr226 contacts substrate. The active-site Proton donor is the Tyr236. Residues Lys245 and 274-276 (VVT) each bind NAD(+).

It belongs to the TER reductase family. In terms of assembly, monomer.

The catalysed reaction is a 2,3-saturated acyl-[ACP] + NAD(+) = a (2E)-enoyl-[ACP] + NADH + H(+). It functions in the pathway lipid metabolism; fatty acid biosynthesis. In terms of biological role, involved in the final reduction of the elongation cycle of fatty acid synthesis (FAS II). Catalyzes the reduction of a carbon-carbon double bond in an enoyl moiety that is covalently linked to an acyl carrier protein (ACP). This is Enoyl-[acyl-carrier-protein] reductase [NADH] from Xanthomonas campestris pv. campestris (strain 8004).